Consider the following 338-residue polypeptide: Glyceraldehyde-3-phosphate dehydrogenase (338 aa).

Residues Thr-11 to Ile-12 and Gly-111 contribute to the NAD(+) site. D-glyceraldehyde 3-phosphate is bound at residue Ser-140 to Asn-142. Residue Cys-141 is the Nucleophile of the active site. Arg-169 provides a ligand contact to NAD(+). The disordered stretch occupies residues Gly-170–His-195. His-195 to Gly-196 is a binding site for D-glyceraldehyde 3-phosphate. Gln-302 is an NAD(+) binding site.

It belongs to the glyceraldehyde-3-phosphate dehydrogenase family. Homotetramer.

The protein localises to the cytoplasm. It carries out the reaction D-glyceraldehyde 3-phosphate + phosphate + NADP(+) = (2R)-3-phospho-glyceroyl phosphate + NADPH + H(+). It catalyses the reaction D-glyceraldehyde 3-phosphate + phosphate + NAD(+) = (2R)-3-phospho-glyceroyl phosphate + NADH + H(+). The protein operates within carbohydrate degradation; glycolysis; pyruvate from D-glyceraldehyde 3-phosphate: step 1/5. This Methanobrevibacter smithii (strain ATCC 35061 / DSM 861 / OCM 144 / PS) protein is Glyceraldehyde-3-phosphate dehydrogenase.